The chain runs to 245 residues: 14-3-3 protein theta (245 aa).

Met1 carries the N-acetylmethionine modification. Lys3 is modified (N6-acetyllysine). Lys49 bears the N6-acetyllysine; alternate mark. A Glycyl lysine isopeptide (Lys-Gly) (interchain with G-Cter in SUMO2); alternate cross-link involves residue Lys49. Lys68 carries the post-translational modification N6-acetyllysine. Tyr82 is modified (3'-nitrotyrosine). Ser92 carries the phosphoserine modification. Tyr104 is subject to 3'-nitrotyrosine. N6-acetyllysine is present on Lys115. A Phosphoserine; by CK1 modification is found at Ser232.

This sequence belongs to the 14-3-3 family. As to quaternary structure, homodimer. Interacts with CDKN1B ('Thr-198' phosphorylated form); the interaction translocates CDKN1B to the cytoplasm. Interacts with SSH1. Interacts with GAB2. Interacts with RGS7 (phosphorylated form). Interacts with CDK16. Interacts with the 'Ser-241' phosphorylated form of PDPK1. Interacts with the 'Thr-369' phosphorylated form of DAPK2. Interacts with PI4KB, TBC1D22A and TBC1D22B. Interacts with SLITRK1. Interacts with RIPOR2. Interacts with INAVA; the interaction increases upon PRR (pattern recognition receptor) stimulation and is required for cellular signaling pathway activation and cytokine secretion. Interacts with MARK2, MARK3 and MARK4. Interacts with MEFV.

It localises to the cytoplasm. Its function is as follows. Adapter protein implicated in the regulation of a large spectrum of both general and specialized signaling pathways. Binds to a large number of partners, usually by recognition of a phosphoserine or phosphothreonine motif. Binding generally results in the modulation of the activity of the binding partner. Negatively regulates the kinase activity of PDPK1. The chain is 14-3-3 protein theta (Ywhaq) from Mus musculus (Mouse).